The following is a 250-amino-acid chain: 1-(5-phosphoribosyl)-5-[(5-phosphoribosylamino)methylideneamino] imidazole-4-carboxamide isomerase (250 aa).

D12 functions as the Proton acceptor in the catalytic mechanism. The active-site Proton donor is D134.

The protein belongs to the HisA/HisF family.

The protein localises to the cytoplasm. It catalyses the reaction 1-(5-phospho-beta-D-ribosyl)-5-[(5-phospho-beta-D-ribosylamino)methylideneamino]imidazole-4-carboxamide = 5-[(5-phospho-1-deoxy-D-ribulos-1-ylimino)methylamino]-1-(5-phospho-beta-D-ribosyl)imidazole-4-carboxamide. Its pathway is amino-acid biosynthesis; L-histidine biosynthesis; L-histidine from 5-phospho-alpha-D-ribose 1-diphosphate: step 4/9. The chain is 1-(5-phosphoribosyl)-5-[(5-phosphoribosylamino)methylideneamino] imidazole-4-carboxamide isomerase from Actinobacillus pleuropneumoniae serotype 7 (strain AP76).